A 185-amino-acid polypeptide reads, in one-letter code: MIDDIRSDAQSRMKKSLEALDTAMKRVRTGRAHPSLLDNITIEYYGAETPLNQMGNISVEEGRTLTISPFDKSLIPQIERAILMSDLGLNPSTSGTLIRLPLPPLTEETRRDLVKVVRAEAEQARVSIRNIRRDANSDLKELLKEKEISEDEQRRGEEQIQQLTDKMVAEVEGVLKEKEEELMTV.

It belongs to the RRF family.

It localises to the cytoplasm. In terms of biological role, responsible for the release of ribosomes from messenger RNA at the termination of protein biosynthesis. May increase the efficiency of translation by recycling ribosomes from one round of translation to another. The protein is Ribosome-recycling factor of Alcanivorax borkumensis (strain ATCC 700651 / DSM 11573 / NCIMB 13689 / SK2).